A 447-amino-acid chain; its full sequence is Acyl-lipid (7-3)-desaturase (447 aa).

One can recognise a Cytochrome b5 heme-binding domain in the interval Leu-36 to Ala-94. Residues His-53 and His-76 each contribute to the heme site. 3 helical membrane passes run Gly-123 to Leu-143, Leu-154 to Asp-174, and Ser-185 to Leu-205. The Histidine box-1 signature appears at His-173–His-177. A Histidine box-2 motif is present at residues His-208–His-213. Helical transmembrane passes span Trp-244–Leu-264, Leu-286–Leu-306, and Ala-315–Ile-335. Positions Gln-386–His-390 match the Histidine box-3 motif.

This sequence belongs to the fatty acid desaturase type 1 family. It depends on Fe(2+) as a cofactor.

The protein resides in the membrane. The enzyme catalyses a (7Z,10Z,13Z,16Z,19Z)-docosapentaenoyl-containing glycerolipid + 2 Fe(II)-[cytochrome b5] + O2 + 2 H(+) = a (4Z,7Z,10Z,13Z,16Z,19Z)-docosahexaenoyl-containing glycerolipid + 2 Fe(III)-[cytochrome b5] + 2 H2O. It carries out the reaction a (7Z,10Z,13Z,16Z)-docosatetraenoyl-containing glycerolipid + 2 Fe(II)-[cytochrome b5] + O2 + 2 H(+) = a (4Z,7Z,10Z,13Z,16Z)-docosapentaenoyl-containing glycerolipid + 2 Fe(III)-[cytochrome b5] + 2 H2O. Fatty acid desaturase that introduces a cis double bond at the 4-position in 22-carbon polyunsaturated fatty acids that contain a Delta(7) double bond, resulting in the production of delta-4 desaturated fatty acid docosahexanoic acid (DHA). The chain is Acyl-lipid (7-3)-desaturase from Rebecca salina (Marine microalga).